The following is a 570-amino-acid chain: Hydroxylamine reductase (570 aa).

The [4Fe-4S] cluster site is built by C5, C8, C17, and C23. H266, E290, C334, C425, C453, C478, E513, and K515 together coordinate hybrid [4Fe-2O-2S] cluster. C425 is modified (cysteine persulfide).

It belongs to the HCP family. Requires [4Fe-4S] cluster as cofactor. The cofactor is hybrid [4Fe-2O-2S] cluster.

It localises to the cytoplasm. It carries out the reaction A + NH4(+) + H2O = hydroxylamine + AH2 + H(+). Functionally, catalyzes the reduction of hydroxylamine to form NH(3) and H(2)O. In Clostridium botulinum (strain Okra / Type B1), this protein is Hydroxylamine reductase.